We begin with the raw amino-acid sequence, 373 residues long: Dual-specificity RNA methyltransferase RlmN (373 aa).

Catalysis depends on Glu94, which acts as the Proton acceptor. The 240-residue stretch at 100–339 (EDDRATLCVS…VIVRKTRGDD (240 aa)) folds into the Radical SAM core domain. Cysteines 107 and 344 form a disulfide. 3 residues coordinate [4Fe-4S] cluster: Cys114, Cys118, and Cys121. Residues 168 to 169 (GE), Ser200, 222 to 224 (SIH), and Asn301 contribute to the S-adenosyl-L-methionine site. Residue Cys344 is the S-methylcysteine intermediate of the active site.

Belongs to the radical SAM superfamily. RlmN family. [4Fe-4S] cluster is required as a cofactor.

The protein resides in the cytoplasm. It catalyses the reaction adenosine(2503) in 23S rRNA + 2 reduced [2Fe-2S]-[ferredoxin] + 2 S-adenosyl-L-methionine = 2-methyladenosine(2503) in 23S rRNA + 5'-deoxyadenosine + L-methionine + 2 oxidized [2Fe-2S]-[ferredoxin] + S-adenosyl-L-homocysteine. It carries out the reaction adenosine(37) in tRNA + 2 reduced [2Fe-2S]-[ferredoxin] + 2 S-adenosyl-L-methionine = 2-methyladenosine(37) in tRNA + 5'-deoxyadenosine + L-methionine + 2 oxidized [2Fe-2S]-[ferredoxin] + S-adenosyl-L-homocysteine. Functionally, specifically methylates position 2 of adenine 2503 in 23S rRNA and position 2 of adenine 37 in tRNAs. m2A2503 modification seems to play a crucial role in the proofreading step occurring at the peptidyl transferase center and thus would serve to optimize ribosomal fidelity. This chain is Dual-specificity RNA methyltransferase RlmN, found in Shewanella baltica (strain OS155 / ATCC BAA-1091).